The chain runs to 226 residues: Cytidylate kinase (226 aa).

12-20 (GPSGAGKGT) provides a ligand contact to ATP.

The protein belongs to the cytidylate kinase family. Type 1 subfamily.

The protein resides in the cytoplasm. It carries out the reaction CMP + ATP = CDP + ADP. The catalysed reaction is dCMP + ATP = dCDP + ADP. The polypeptide is Cytidylate kinase (Vibrio parahaemolyticus serotype O3:K6 (strain RIMD 2210633)).